A 474-amino-acid chain; its full sequence is ATP synthase subunit beta, chloroplastic (474 aa).

155–162 (GGAGVGKT) is an ATP binding site.

The protein belongs to the ATPase alpha/beta chains family. F-type ATPases have 2 components, CF(1) - the catalytic core - and CF(0) - the membrane proton channel. CF(1) has five subunits: alpha(3), beta(3), gamma(1), delta(1), epsilon(1). CF(0) has four main subunits: a(1), b(1), b'(1) and c(9-12).

It is found in the plastid. Its subcellular location is the chloroplast thylakoid membrane. It carries out the reaction ATP + H2O + 4 H(+)(in) = ADP + phosphate + 5 H(+)(out). In terms of biological role, produces ATP from ADP in the presence of a proton gradient across the membrane. The catalytic sites are hosted primarily by the beta subunits. The sequence is that of ATP synthase subunit beta, chloroplastic from Thalassiosira pseudonana (Marine diatom).